The following is a 288-amino-acid chain: Syntaxin-1A (288 aa).

Basic and acidic residues predominate over residues 1 to 13 (MKDRTQELRTAKD). The segment at 1 to 20 (MKDRTQELRTAKDSDDDDDV) is disordered. At 1 to 265 (MKDRTQELRT…KYQSKARRKK (265 aa)) the chain is on the cytoplasmic side. Phosphoserine is present on residues S14, S64, and S95. Residues 68–109 (DEKTKEELEELMSDIKKTANKVRSKLKSIEQSIEQEEGLNRS) are a coiled coil. S188 is subject to Phosphoserine; by DAPK1. The t-SNARE coiled-coil homology domain maps to 192 to 254 (LSEIETRHSE…ERAVSDTKKA (63 aa)). Glycyl lysine isopeptide (Lys-Gly) (interchain with G-Cter in SUMO) cross-links involve residues K252, K253, and K256. A helical; Anchor for type IV membrane protein transmembrane segment spans residues 266–288 (IMIVICCVVLGIVIASTFGGIFG).

It belongs to the syntaxin family. As to quaternary structure, part of the SNARE core complex containing SNAP25, VAMP2 and STX1A; this complex constitutes the basic catalytic machinery of the complex neurotransmitter release apparatus. The SNARE complex interacts with CPLX1. Interacts with STXBP1. The interaction with STXBP1 promotes assembly of the SNARE complex. Interacts (via C-terminus) with KCNB1 (via C-terminus); the interaction increases in a calcium-dependent manner and induces a pore-independent enhancement of exocytosis in neuroendocrine cells, chromaffin cells, pancreatic beta cells and from the soma of dorsal root ganglia (DRG) neurons. Interacts with SYTL4. Interacts with STXBP6. Interacts with PLCL1 (via C2 domain). Interacts with OTOF. Interacts with LGI3. Interacts (via the H3 domain) with SLC6A4 (via the N-terminus); this interaction regulates SLC4A6 channel conductance in thalamocortical neurons. Interacts with SYT6 and SYT8; the interaction is Ca(2+)-dependent. Interacts with VAMP8. Interacts with SNAP23. Interacts with VAPA and SYBU. Interacts with PRRT2. Interacts with SEPT8. Interacts with STXBP5L. Interacts with synaptotagmin-1/SYT1. Interacts with SEPTIN5; in the cerebellar cortex. Interacts with SEPTIN4; in the striatum. In terms of processing, phosphorylated by CK2. Phosphorylation at Ser-188 by DAPK1 significantly decreases its interaction with STXBP1. Sumoylated, sumoylation is required for regulation of synaptic vesicle endocytosis. Post-translationally, (Microbial infection) Targeted and hydrolyzed by C.botulinum neurotoxin type C (BoNT/C) which inhibits neurotransmitter release. Probably hydrolyzes the 253-Lys-|-Ala-254 bond.

The protein resides in the cytoplasmic vesicle. It is found in the secretory vesicle. The protein localises to the synaptic vesicle membrane. It localises to the synapse. Its subcellular location is the synaptosome. The protein resides in the cell membrane. Functionally, plays an essential role in hormone and neurotransmitter calcium-dependent exocytosis and endocytosis. Part of the SNARE (Soluble NSF Attachment Receptor) complex composed of SNAP25, STX1A and VAMP2 which mediates the fusion of synaptic vesicles with the presynaptic plasma membrane. STX1A and SNAP25 are localized on the plasma membrane while VAMP2 resides in synaptic vesicles. The pairing of the three SNAREs from the N-terminal SNARE motifs to the C-terminal anchors leads to the formation of the SNARE complex, which brings membranes into close proximity and results in final fusion. Participates in the calcium-dependent regulation of acrosomal exocytosis in sperm. Also plays an important role in the exocytosis of hormones such as insulin or glucagon-like peptide 1 (GLP-1). This chain is Syntaxin-1A (STX1A), found in Bos taurus (Bovine).